A 331-amino-acid chain; its full sequence is HTH-type transcriptional regulator GntR (331 aa).

The 55-residue stretch at 6-60 (PVLQDVADRVGVTKMTVSRFLRNPEQVSVALRGKIAAALDELGYIPNRAPDILSN) folds into the HTH lacI-type domain. The segment at residues 8–27 (LQDVADRVGVTKMTVSRFLR) is a DNA-binding region (H-T-H motif).

It participates in carbohydrate acid metabolism; D-gluconate degradation [regulation]. Its function is as follows. Negative regulator for the gluconate utilization system GNT-I, the gntUKR operon. In Escherichia coli O6:H1 (strain CFT073 / ATCC 700928 / UPEC), this protein is HTH-type transcriptional regulator GntR (gntR).